We begin with the raw amino-acid sequence, 122 residues long: UPF0102 protein VCM66_0538 (122 aa).

The protein belongs to the UPF0102 family.

The sequence is that of UPF0102 protein VCM66_0538 from Vibrio cholerae serotype O1 (strain M66-2).